The primary structure comprises 135 residues: MNRVKSREYLLQLAYQMEITSETALETFNSFMENEDISKDDLDLAYIKSGLLGIEENKEKLDSLIESQLVKWKLNRISKVNLSILRISTYEILFAEDVPGKVSINEAIELCKKYSDNKSVSFINGVLDKVYKNMQ.

The protein belongs to the NusB family.

Functionally, involved in transcription antitermination. Required for transcription of ribosomal RNA (rRNA) genes. Binds specifically to the boxA antiterminator sequence of the ribosomal RNA (rrn) operons. The chain is Transcription antitermination protein NusB from Clostridium perfringens (strain ATCC 13124 / DSM 756 / JCM 1290 / NCIMB 6125 / NCTC 8237 / Type A).